A 187-amino-acid polypeptide reads, in one-letter code: ATP synthase subunit delta (187 aa).

The protein belongs to the ATPase delta chain family. As to quaternary structure, F-type ATPases have 2 components, F(1) - the catalytic core - and F(0) - the membrane proton channel. F(1) has five subunits: alpha(3), beta(3), gamma(1), delta(1), epsilon(1). F(0) has three main subunits: a(1), b(2) and c(10-14). The alpha and beta chains form an alternating ring which encloses part of the gamma chain. F(1) is attached to F(0) by a central stalk formed by the gamma and epsilon chains, while a peripheral stalk is formed by the delta and b chains.

Its subcellular location is the cell inner membrane. Its function is as follows. F(1)F(0) ATP synthase produces ATP from ADP in the presence of a proton or sodium gradient. F-type ATPases consist of two structural domains, F(1) containing the extramembraneous catalytic core and F(0) containing the membrane proton channel, linked together by a central stalk and a peripheral stalk. During catalysis, ATP synthesis in the catalytic domain of F(1) is coupled via a rotary mechanism of the central stalk subunits to proton translocation. This protein is part of the stalk that links CF(0) to CF(1). It either transmits conformational changes from CF(0) to CF(1) or is implicated in proton conduction. In Leptospira biflexa serovar Patoc (strain Patoc 1 / Ames), this protein is ATP synthase subunit delta.